A 966-amino-acid polypeptide reads, in one-letter code: Mitogen-activated protein kinase kinase kinase 13 (966 aa).

Residues 1–59 are disordered; that stretch reads MANPQEHLSCSSSPRLPLSENKTFNGLQDDLAPMGSHASPKLLKDQQEKGMVQTELAEG. Low complexity predominate over residues 8–19; it reads LSCSSSPRLPLS. The region spanning 168-409 is the Protein kinase domain; it reads ISELQWLGSG…FRQTLMHLDI (242 aa). ATP contacts are provided by residues 174 to 182 and Lys-195; that span reads LGSGAQGAV. The active-site Proton acceptor is Asp-279. Leucine-zipper regions lie at residues 433-454 and 486-507; these read VKKHFEKIKSEGTCIHRLDEEL and LSAIMLQLEMREKELIKREQAV. Residues 457–496 adopt a coiled-coil conformation; that stretch reads RRREELRHALDIREHYERKLERANNLYMELSAIMLQLEMR. Disordered stretches follow at residues 561-663, 743-874, and 937-966; these read EVAP…GQDI, LDVP…DELA, and QFEESDCDSSDGECSDATVRTNKHYSSATW. A compositionally biased stretch (low complexity) spans 567–581; that stretch reads SPLSGSPKLSSSSSK. The span at 582 to 594 shows a compositional bias: basic residues; that stretch reads SRYRSKPRHRRGN. A compositionally biased stretch (polar residues) spans 609 to 622; sequence QPAQEDSPHPTSLH. The span at 629-642 shows a compositional bias: low complexity; the sequence is PSSQHHNLLQQQYQ. The segment covering 814 to 827 has biased composition (acidic residues); the sequence is DSSEEEEGEVDSEV. The segment at 815-828 is acidic; the sequence is SSEEEEGEVDSEVE. The segment covering 840 to 855 has biased composition (polar residues); that stretch reads SSCQSYSTFSSENFSV. The span at 939–950 shows a compositional bias: acidic residues; it reads EESDCDSSDGEC. A compositionally biased stretch (polar residues) spans 954–966; that stretch reads TVRTNKHYSSATW.

The protein belongs to the protein kinase superfamily. Ser/Thr protein kinase family. As to quaternary structure, homodimer; forms dimers through the leucine-zipper motif. Interacts with the C-terminus of MAPK8IP1 through the kinase catalytic domain. Binds PRDX3. Associates with the IKK complex through the kinase domain. Mg(2+) is required as a cofactor. In terms of processing, autophosphorylated on serine and threonine residues.

It localises to the cytoplasm. The protein localises to the membrane. It carries out the reaction L-seryl-[protein] + ATP = O-phospho-L-seryl-[protein] + ADP + H(+). The enzyme catalyses L-threonyl-[protein] + ATP = O-phospho-L-threonyl-[protein] + ADP + H(+). With respect to regulation, activated by autophosphorylation and homodimerization. Functionally, activates the JUN N-terminal pathway through activation of the MAP kinase kinase MAP2K7. Acts synergistically with PRDX3 to regulate the activation of NF-kappa-B in the cytosol. This activation is kinase-dependent and involves activating the IKK complex, the IKBKB-containing complex that phosphorylates inhibitors of NF-kappa-B. The chain is Mitogen-activated protein kinase kinase kinase 13 (MAP3K13) from Bos taurus (Bovine).